The following is an 852-amino-acid chain: MAVEDSTLQVVVRVRPPTPRELDSQRRPVVQVVDERVLVFNPEEPDGGFPGLKWGGTHDGPKKKGKDLTFVFDRVFGEAATQQDVFQHTTHSVLDSFLQGYNCSVFAYGATGAGKTHTMLGREGDPGIMYLTTVELYRRLEARQQEKHFEVLISYQEVYNEQIHDLLEPKGPLAIREDPDKGVVVQGLSFHQPASAEQLLEILTRGNRNRTQHPTDANATSSRSHAIFQIFVKQQDRVPGLTQAVQVAKMSLIDLAGSERASSTHAKGERLREGANINRSLLALINVLNALADAKGRKTHVPYRDSKLTRLLKDSLGGNCRTVMIAAISPSSLTYEDTYNTLKYADRAKEIRLSLKSNVTSLDCHISQYATICQQLQAEVAALRKKLQVYEGGGQPPPQDLPGSPKSGPPPEHQPCTPELPAGPRALQEESLGMEAQVERAMEGNSSDQEQSPEDEDEGPAEEVPTQMPEQNPTHALPESPRLTLQPKPVVGHFSARELDGDRSKQLALKVLCVAQRQYSLLQAANLLTPDMITEFETLQQLVQEEKIEPGAEALRTSGLARGAPLAQELCSESIPVPSPLCPEPPGYTGPVTRTMARRLSGPLHTLGIPPGPNCTPAQGSRWPMEKKRRRPSALEADSPMAPKRGTKRQRQSFLPCLRRGSLPDTQPSQGPSTPKGERASSPCHSPRVCPATVIKSRVPLGPSAMQNCSTPLALPTRDLNATFDLSEEPPSKPSFHECIGWDKIPQELSRLDQPFIPRAPVPLFTMKGPKPTSSLPGTSACKKKRVASSSVSHGRSRIARLPSSTLKRPAGPLVLPELPLSPLCPSNRRNGKDLIRVGRALSAGNGVTKVS.

The Kinesin motor domain occupies 7–351 (TLQVVVRVRP…LKYADRAKEI (345 aa)). 109 to 116 (GATGAGKT) is a binding site for ATP. The stretch at 366-393 (ISQYATICQQLQAEVAALRKKLQVYEGG) forms a coiled coil. 2 disordered regions span residues 390–424 (YEGGGQPPPQDLPGSPKSGPPPEHQPCTPELPAGP) and 437–485 (QVER…RLTL). Position 404 is a phosphoserine (Ser-404). A Phosphothreonine modification is found at Thr-417. A compositionally biased stretch (acidic residues) spans 451–461 (QSPEDEDEGPA). Ser-452, Ser-480, and Ser-558 each carry phosphoserine. Disordered regions lie at residues 575-594 (IPVPSPLCPEPPGYTGPVTR) and 602-689 (GPLH…SPRV). Pro residues predominate over residues 577-588 (VPSPLCPEPPGY). Positions 624 to 632 (PMEKKRRRP) match the Nuclear localization signal motif. A phosphoserine mark is found at Ser-633 and Ser-639. An MAPRE1-binding motif is present at residues 653-656 (SFLP). Ser-662 is subject to Phosphoserine. Over residues 664-673 (PDTQPSQGPS) the composition is skewed to polar residues. Position 674 is a phosphothreonine (Thr-674). Residues 711–736 (TPLALPTRDLNATFDLSEEPPSKPSF) are KIF2C-binding. Residues 767-798 (MKGPKPTSSLPGTSACKKKRVASSSVSHGRSR) are disordered. Short sequence motifs (MAPRE1-binding) lie at residues 774–777 (SSLP) and 800–803 (ARLP). Residue Ser-822 is modified to Phosphoserine.

This sequence belongs to the TRAFAC class myosin-kinesin ATPase superfamily. Kinesin family. Interacts with MAPRE1; this interaction is required for efficient accumulation at microtubule plus ends. Interacts with KIF2C at microtubule tips; this interaction increases the affinity of both partners for microtubule plus ends and is required for robust microtubule depolymerization. KIF2C phosphorylation by AURKA or AURKB strongly reduces KIF18B-binding. In terms of tissue distribution, shows a prominent expression in the amygdala.

It localises to the nucleus. Its subcellular location is the cytoplasm. The protein resides in the cytoskeleton. In complex with KIF2C, constitutes the major microtubule plus-end depolymerizing activity in mitotic cells. Its major role may be to transport KIF2C and/or MAPRE1 along microtubules. This Homo sapiens (Human) protein is Kinesin-like protein KIF18B (KIF18B).